An 88-amino-acid chain; its full sequence is MKTVLAFLFLTFIAFTHAESYEDVKEEIKNEVEREIFEDLEEESDVLESNVRELNDAKPWRFRRAIRRVRWRKVAPYIPFVVRTVGKK.

The signal sequence occupies residues 1 to 18; that stretch reads MKTVLAFLFLTFIAFTHA. Positions 19 to 57 are excised as a propeptide; it reads ESYEDVKEEIKNEVEREIFEDLEEESDVLESNVRELNDA. Val-85 bears the Valine amide mark.

The protein belongs to the arminin family. Expressed in entodermal epithelium along the body column.

The protein resides in the secreted. It localises to the target cell membrane. Functionally, antimicrobial peptide with a broad-spectrum antimicrobial activity. Keeps its antibacterial activity under a wide range of salt concentrations that mimic physiological conditions of human blood, which is surprising, since Hydra is an obligate freshwater animal with nearly no salt tolerance. Does not affect red blood cells. The chain is Arminin 1b from Hydra vulgaris (Hydra).